The primary structure comprises 148 residues: 3-dehydroquinate dehydratase (148 aa).

Y23 (proton acceptor) is an active-site residue. Substrate-binding residues include N75, H81, and D88. H101 functions as the Proton donor in the catalytic mechanism. Residues 102-103 (IS) and R112 contribute to the substrate site.

The protein belongs to the type-II 3-dehydroquinase family. As to quaternary structure, homododecamer.

It carries out the reaction 3-dehydroquinate = 3-dehydroshikimate + H2O. Its pathway is metabolic intermediate biosynthesis; chorismate biosynthesis; chorismate from D-erythrose 4-phosphate and phosphoenolpyruvate: step 3/7. Functionally, catalyzes a trans-dehydration via an enolate intermediate. The protein is 3-dehydroquinate dehydratase of Methylococcus capsulatus (strain ATCC 33009 / NCIMB 11132 / Bath).